Reading from the N-terminus, the 685-residue chain is Methionine--tRNA ligase (685 aa).

The 'HIGH' region motif lies at 12 to 22 (PYANGSIHLGH). Zn(2+) is bound by residues cysteine 143, cysteine 146, cysteine 156, and cysteine 159. The 'KMSKS' region motif lies at 339 to 343 (KMSKS). Lysine 342 is an ATP binding site. The 104-residue stretch at 582-685 (DFMKIDMRVA…TGAQPGDKVG (104 aa)) folds into the tRNA-binding domain.

Belongs to the class-I aminoacyl-tRNA synthetase family. MetG type 1 subfamily. Homodimer. Zn(2+) serves as cofactor.

The protein resides in the cytoplasm. The catalysed reaction is tRNA(Met) + L-methionine + ATP = L-methionyl-tRNA(Met) + AMP + diphosphate. Functionally, is required not only for elongation of protein synthesis but also for the initiation of all mRNA translation through initiator tRNA(fMet) aminoacylation. This chain is Methionine--tRNA ligase, found in Neisseria meningitidis serogroup B (strain ATCC BAA-335 / MC58).